A 468-amino-acid chain; its full sequence is Argininosuccinate lyase (468 aa).

Belongs to the lyase 1 family. Argininosuccinate lyase subfamily.

It localises to the cytoplasm. The catalysed reaction is 2-(N(omega)-L-arginino)succinate = fumarate + L-arginine. The protein operates within amino-acid biosynthesis; L-arginine biosynthesis; L-arginine from L-ornithine and carbamoyl phosphate: step 3/3. This is Argininosuccinate lyase from Paraburkholderia phytofirmans (strain DSM 17436 / LMG 22146 / PsJN) (Burkholderia phytofirmans).